We begin with the raw amino-acid sequence, 284 residues long: 4-diphosphocytidyl-2-C-methyl-D-erythritol kinase (284 aa).

Lysine 14 is a catalytic residue. 98–108 is a binding site for ATP; it reads PMGGGLGGGSS. Residue aspartate 140 is part of the active site.

The protein belongs to the GHMP kinase family. IspE subfamily.

It catalyses the reaction 4-CDP-2-C-methyl-D-erythritol + ATP = 4-CDP-2-C-methyl-D-erythritol 2-phosphate + ADP + H(+). The protein operates within isoprenoid biosynthesis; isopentenyl diphosphate biosynthesis via DXP pathway; isopentenyl diphosphate from 1-deoxy-D-xylulose 5-phosphate: step 3/6. In terms of biological role, catalyzes the phosphorylation of the position 2 hydroxy group of 4-diphosphocytidyl-2C-methyl-D-erythritol. This is 4-diphosphocytidyl-2-C-methyl-D-erythritol kinase from Shewanella pealeana (strain ATCC 700345 / ANG-SQ1).